Consider the following 654-residue polypeptide: tRNA 5-methylaminomethyl-2-thiouridine biosynthesis bifunctional protein MnmC (654 aa).

The tract at residues Met1–Gln235 is tRNA (mnm(5)s(2)U34)-methyltransferase. The interval Val261–Gly654 is FAD-dependent cmnm(5)s(2)U34 oxidoreductase.

It in the N-terminal section; belongs to the methyltransferase superfamily. tRNA (mnm(5)s(2)U34)-methyltransferase family. In the C-terminal section; belongs to the DAO family. The cofactor is FAD.

The protein localises to the cytoplasm. It carries out the reaction 5-aminomethyl-2-thiouridine(34) in tRNA + S-adenosyl-L-methionine = 5-methylaminomethyl-2-thiouridine(34) in tRNA + S-adenosyl-L-homocysteine + H(+). Catalyzes the last two steps in the biosynthesis of 5-methylaminomethyl-2-thiouridine (mnm(5)s(2)U) at the wobble position (U34) in tRNA. Catalyzes the FAD-dependent demodification of cmnm(5)s(2)U34 to nm(5)s(2)U34, followed by the transfer of a methyl group from S-adenosyl-L-methionine to nm(5)s(2)U34, to form mnm(5)s(2)U34. This is tRNA 5-methylaminomethyl-2-thiouridine biosynthesis bifunctional protein MnmC from Pseudomonas paraeruginosa (strain DSM 24068 / PA7) (Pseudomonas aeruginosa (strain PA7)).